The following is a 219-amino-acid chain: tRNA (guanine-N(7)-)-methyltransferase (219 aa).

S-adenosyl-L-methionine contacts are provided by Glu46, Glu71, Asn100, and Asp122. Asp122 is a catalytic residue. Substrate contacts are provided by residues Lys126, Asp158, and 199-202 (TEYE).

It belongs to the class I-like SAM-binding methyltransferase superfamily. TrmB family.

The enzyme catalyses guanosine(46) in tRNA + S-adenosyl-L-methionine = N(7)-methylguanosine(46) in tRNA + S-adenosyl-L-homocysteine. It participates in tRNA modification; N(7)-methylguanine-tRNA biosynthesis. Catalyzes the formation of N(7)-methylguanine at position 46 (m7G46) in tRNA. The protein is tRNA (guanine-N(7)-)-methyltransferase of Leuconostoc citreum (strain KM20).